Reading from the N-terminus, the 72-residue chain is Translational regulator CsrA (72 aa).

The protein belongs to the CsrA/RsmA family. As to quaternary structure, homodimer; the beta-strands of each monomer intercalate to form a hydrophobic core, while the alpha-helices form wings that extend away from the core.

It is found in the cytoplasm. Its function is as follows. A translational regulator that binds mRNA to regulate translation initiation and/or mRNA stability. Usually binds in the 5'-UTR at or near the Shine-Dalgarno sequence preventing ribosome-binding, thus repressing translation. Its main target seems to be the major flagellin gene, while its function is anatagonized by FliW. This Clostridium botulinum (strain Okra / Type B1) protein is Translational regulator CsrA.